A 1412-amino-acid chain; its full sequence is DNA-directed RNA polymerase subunit beta' (1412 aa).

The Zn(2+) site is built by C70, C72, C85, and C88. The Mg(2+) site is built by D460, D462, and D464. C814, C888, C895, and C898 together coordinate Zn(2+). Residues 1378–1412 form a disordered region; sequence EREAARQLANPFEDAPVTVDADAPQSDAGQEGSAE.

This sequence belongs to the RNA polymerase beta' chain family. The RNAP catalytic core consists of 2 alpha, 1 beta, 1 beta' and 1 omega subunit. When a sigma factor is associated with the core the holoenzyme is formed, which can initiate transcription. Mg(2+) is required as a cofactor. Zn(2+) serves as cofactor.

The catalysed reaction is RNA(n) + a ribonucleoside 5'-triphosphate = RNA(n+1) + diphosphate. DNA-dependent RNA polymerase catalyzes the transcription of DNA into RNA using the four ribonucleoside triphosphates as substrates. This is DNA-directed RNA polymerase subunit beta' from Bordetella petrii (strain ATCC BAA-461 / DSM 12804 / CCUG 43448).